The chain runs to 273 residues: MWNDARTINLIANTLAVLAVAAMLLAGVAWVAQRPYFTLAAIEIESMPETEMHYVSTGAVRAAIAGRFGGNFFTVDLDEAREAFESVPWVRHATVRRIWPNTLRVRVEEQQPLALWNENQMINTWGEAFTANTGELADDMVLPHFTGPEGTESLVVQRYAELARWFAPLDMHVRELVLNPRYAWAVTLSNGMKLDLGRDPGADAPDPHGLPGALPFAARIQRFVQAWPVVSSRLEGRTVTQADLRYPTGFALALAPLPPEHASHSKSKPAKKR.

At 1–10 (MWNDARTINL) the chain is on the cytoplasmic side. Residues 11 to 31 (IANTLAVLAVAAMLLAGVAWV) form a helical membrane-spanning segment. At 32–273 (AQRPYFTLAA…HSKSKPAKKR (242 aa)) the chain is on the periplasmic side. The POTRA domain maps to 37 to 110 (FTLAAIEIES…NTLRVRVEEQ (74 aa)).

Belongs to the FtsQ/DivIB family. FtsQ subfamily. In terms of assembly, part of a complex composed of FtsB, FtsL and FtsQ.

Its subcellular location is the cell inner membrane. In terms of biological role, essential cell division protein. May link together the upstream cell division proteins, which are predominantly cytoplasmic, with the downstream cell division proteins, which are predominantly periplasmic. May control correct divisome assembly. The polypeptide is Cell division protein FtsQ (Bordetella pertussis (strain Tohama I / ATCC BAA-589 / NCTC 13251)).